The following is a 1190-amino-acid chain: PAN2-PAN3 deadenylation complex catalytic subunit PAN2 (1190 aa).

WD repeat units follow at residues 24–63 (TTIV…NSLY), 129–166 (NKFN…PNVL), 167–207 (SSFD…TMKT), 222–264 (GNYI…AIAP), 266–306 (PFPA…NVYL), and 322–361 (NNKP…KDFV). Residues 364–511 (PQPVEQPDII…FQYKFQGKLN (148 aa)) form a linker region. The USP domain occupies 512 to 924 (KVPNCYSRLQ…KPIVIMYQQT (413 aa)). An Exonuclease domain is found at 988 to 1158 (VAIDAEFVML…EDANTALLLY (171 aa)). Positions 991, 993, 1097, and 1150 each coordinate a divalent metal cation.

This sequence belongs to the peptidase C19 family. PAN2 subfamily. Forms a heterotrimer with an asymmetric homodimer of the regulatory subunit PAN3 to form the poly(A)-nuclease (PAN) deadenylation complex. A divalent metal cation serves as cofactor.

The protein localises to the cytoplasm. The catalysed reaction is Exonucleolytic cleavage of poly(A) to 5'-AMP.. Positively regulated by the regulatory subunit PAN3. Catalytic subunit of the poly(A)-nuclease (PAN) deadenylation complex, one of two cytoplasmic mRNA deadenylases involved in mRNA turnover. PAN specifically shortens poly(A) tails of RNA and the activity is stimulated by poly(A)-binding protein PAB1. PAN deadenylation is followed by rapid degradation of the shortened mRNA tails by the CCR4-NOT complex. Deadenylated mRNAs are then degraded by two alternative mechanisms, namely exosome-mediated 3'-5' exonucleolytic degradation, or deadenylation-dependent mRNA decaping and subsequent 5'-3' exonucleolytic degradation by XRN1. May also be involved in post-transcriptional maturation of mRNA poly(A) tails. The polypeptide is PAN2-PAN3 deadenylation complex catalytic subunit PAN2 (Candida albicans (strain SC5314 / ATCC MYA-2876) (Yeast)).